Here is a 229-residue protein sequence, read N- to C-terminus: Prolactin (229 aa).

Positions 1–30 (MDSKVSSQKGSRLLLLLVVSNLLLCQGVVS) are cleaved as a signal peptide. A disulfide bridge connects residues cysteine 34 and cysteine 41. 3 positions are modified to phosphoserine: serine 56, serine 64, and serine 120. 2 disulfides stabilise this stretch: cysteine 88/cysteine 204 and cysteine 221/cysteine 229.

The protein belongs to the somatotropin/prolactin family. In terms of assembly, interacts with PRLR.

It localises to the secreted. Prolactin acts primarily on the mammary gland by promoting lactation. The chain is Prolactin (PRL) from Cervus elaphus (Red deer).